The primary structure comprises 393 residues: Cysteine desulfurase (393 aa).

Pyridoxal 5'-phosphate contacts are provided by residues 76–77, N155, Q183, and 203–205; these read GT and SAH. K206 carries the post-translational modification N6-(pyridoxal phosphate)lysine. A pyridoxal 5'-phosphate-binding site is contributed by T241. The active-site Cysteine persulfide intermediate is C328. Residue C328 participates in [2Fe-2S] cluster binding.

This sequence belongs to the class-V pyridoxal-phosphate-dependent aminotransferase family. NifS/IscS subfamily. In terms of assembly, homodimer. Requires pyridoxal 5'-phosphate as cofactor.

The catalysed reaction is (sulfur carrier)-H + L-cysteine = (sulfur carrier)-SH + L-alanine. Catalyzes the removal of elemental sulfur atoms from cysteine to produce alanine. Seems to participate in the biosynthesis of the nitrogenase metalloclusters by providing the inorganic sulfur required for the Fe-S core formation. This is Cysteine desulfurase from Bradyrhizobium diazoefficiens (strain JCM 10833 / BCRC 13528 / IAM 13628 / NBRC 14792 / USDA 110).